A 907-amino-acid chain; its full sequence is Valine--tRNA ligase (907 aa).

The short motif at 45–55 (PNVTGSLHMGH) is the 'HIGH' region element. Positions 554 to 558 (KMSKS) match the 'KMSKS' region motif. Residue lysine 557 participates in ATP binding. The stretch at 838–870 (GQLIDLEAERARLMKDVSKIEQDIEKLSAKLSN) forms a coiled coil.

Belongs to the class-I aminoacyl-tRNA synthetase family. ValS type 1 subfamily. As to quaternary structure, monomer.

The protein localises to the cytoplasm. It catalyses the reaction tRNA(Val) + L-valine + ATP = L-valyl-tRNA(Val) + AMP + diphosphate. In terms of biological role, catalyzes the attachment of valine to tRNA(Val). As ValRS can inadvertently accommodate and process structurally similar amino acids such as threonine, to avoid such errors, it has a 'posttransfer' editing activity that hydrolyzes mischarged Thr-tRNA(Val) in a tRNA-dependent manner. The polypeptide is Valine--tRNA ligase (Bartonella henselae (strain ATCC 49882 / DSM 28221 / CCUG 30454 / Houston 1) (Rochalimaea henselae)).